We begin with the raw amino-acid sequence, 251 residues long: Glucosamine-6-phosphate deaminase (251 aa).

The Proton acceptor; for enolization step role is filled by Asp73. Asn142 serves as the catalytic For ring-opening step. Residue His144 is the Proton acceptor; for ring-opening step of the active site. Glu149 acts as the For ring-opening step in catalysis.

The protein belongs to the glucosamine/galactosamine-6-phosphate isomerase family. NagB subfamily.

It carries out the reaction alpha-D-glucosamine 6-phosphate + H2O = beta-D-fructose 6-phosphate + NH4(+). It participates in amino-sugar metabolism; N-acetylneuraminate degradation; D-fructose 6-phosphate from N-acetylneuraminate: step 5/5. Functionally, catalyzes the reversible isomerization-deamination of glucosamine 6-phosphate (GlcN6P) to form fructose 6-phosphate (Fru6P) and ammonium ion. The chain is Glucosamine-6-phosphate deaminase from Rhodopirellula baltica (strain DSM 10527 / NCIMB 13988 / SH1).